Consider the following 304-residue polypeptide: Recombination-associated protein RdgC (304 aa).

The protein belongs to the RdgC family.

The protein resides in the cytoplasm. It is found in the nucleoid. May be involved in recombination. The protein is Recombination-associated protein RdgC of Dechloromonas aromatica (strain RCB).